We begin with the raw amino-acid sequence, 489 residues long: ATP synthase subunit beta 1 (489 aa).

159 to 166 (GGAGVGKT) provides a ligand contact to ATP. Over residues 465–477 (EKSKKAAEDKPKA) the composition is skewed to basic and acidic residues. The segment at 465 to 489 (EKSKKAAEDKPKAEEDEDATSLHDA) is disordered.

This sequence belongs to the ATPase alpha/beta chains family. F-type ATPases have 2 components, CF(1) - the catalytic core - and CF(0) - the membrane proton channel. CF(1) has five subunits: alpha(3), beta(3), gamma(1), delta(1), epsilon(1). CF(0) has three main subunits: a(1), b(2) and c(9-12). The alpha and beta chains form an alternating ring which encloses part of the gamma chain. CF(1) is attached to CF(0) by a central stalk formed by the gamma and epsilon chains, while a peripheral stalk is formed by the delta and b chains.

Its subcellular location is the cell inner membrane. It catalyses the reaction ATP + H2O + 4 H(+)(in) = ADP + phosphate + 5 H(+)(out). In terms of biological role, produces ATP from ADP in the presence of a proton gradient across the membrane. The catalytic sites are hosted primarily by the beta subunits. This Marinomonas sp. (strain MWYL1) protein is ATP synthase subunit beta 1.